The primary structure comprises 160 residues: Peripheral myelin protein 22 (160 aa).

A topological domain (cytoplasmic) is located at residue M1. A helical membrane pass occupies residues 2 to 31 (LLLLLGILFLHIAVLVLLFVSTIVSQWLVG). Over 32 to 64 (NGHRTDLWQNCTTSALGAVQHCYSSSVSEWLQS) the chain is Extracellular. The N-linked (GlcNAc...) asparagine glycan is linked to N41. A helical membrane pass occupies residues 65 to 91 (VQATMILSVIFSVLSLFLFFCQLFTLT). Residues 92–95 (KGGR) lie on the Cytoplasmic side of the membrane. The chain crosses the membrane as a helical span at residues 96–119 (FYITGVFQILAGLCVMSAAAIYTV). The Extracellular segment spans residues 120-133 (RHSEWHVNNDYSYG). Residues 134–156 (FAYILAWVAFPLALLSGIIYVIL) form a helical membrane-spanning segment. The Cytoplasmic portion of the chain corresponds to 157–160 (RKRE).

It belongs to the PMP-22/EMP/MP20 family. Post-translationally, ubiquitinated by the DCX(DCAF13) E3 ubiquitin ligase complex, leading to its degradation. Found exclusively in the peripheral nervous system. Present in both myelinating and nonmyelinating Schwann cells. Found in the tumors of Schwann cell lineage where axons are present (neurofibromas) but not where axons are absent (schwannomas).

The protein localises to the cell membrane. Functionally, might be involved in growth regulation, and in myelinization in the peripheral nervous system. This is Peripheral myelin protein 22 (Pmp22) from Rattus norvegicus (Rat).